Reading from the N-terminus, the 153-residue chain is Small ribosomal subunit protein uS13 (153 aa).

This sequence belongs to the universal ribosomal protein uS13 family. In terms of assembly, part of the 30S ribosomal subunit. Forms a loose heterodimer with protein S19. Forms two bridges to the 50S subunit in the 70S ribosome.

Its function is as follows. Located at the top of the head of the 30S subunit, it contacts several helices of the 16S rRNA. In the 70S ribosome it contacts the 23S rRNA (bridge B1a) and protein L5 of the 50S subunit (bridge B1b), connecting the 2 subunits; these bridges are implicated in subunit movement. In Pyrobaculum calidifontis (strain DSM 21063 / JCM 11548 / VA1), this protein is Small ribosomal subunit protein uS13.